Consider the following 369-residue polypeptide: MRAEIENYIKKIEQSLDLIWRSLDIEALTVRLTELEELTADPNLWNNNANAQTLLREKNNLEEKLNVFNKLKSNLKEILELEAMAEVENDLETLNQIEQDFKKLSIITAKFETECLFSGETDCNNCFLEINAGAGGTESHDWASIMMRMYLRFAERLGFKTKIINMINGEEVGIKSCTIRIIGKRAYGWFKTESGVHRLVRISPFNAAGKRMTSFASSWIYPEIDDDIAITIEDKDLRIDTFRSSGAGGQHVNTTDSAVRITHIPTNTVTQCQSDRSQHKNKAQAMKMLQAKLYKLEMQKRNENVDKQNANKTDNSWGHQIRSYVLQPYQIVKDLRTNYETSDTKGVLDGNLEDFVSASLSMNNSGNKT.

Gln250 carries the post-translational modification N5-methylglutamine.

The protein belongs to the prokaryotic/mitochondrial release factor family. Post-translationally, methylated by PrmC. Methylation increases the termination efficiency of RF2.

The protein localises to the cytoplasm. Functionally, peptide chain release factor 2 directs the termination of translation in response to the peptide chain termination codons UGA and UAA. This chain is Peptide chain release factor 2 (prfB), found in Rickettsia prowazekii (strain Madrid E).